The primary structure comprises 332 residues: Heterogeneous nuclear ribonucleoprotein A/B (332 aa).

Positions 1–66 (MSEAGEEQPM…DQINASKNEE (66 aa)) are disordered. A compositionally biased stretch (low complexity) spans 29–49 (GRGWTGAAAGAGGATAAPPSG). RRM domains follow at residues 69–154 (GKMF…PVKK) and 153–233 (KKIF…QPKE). Ser-81 carries the phosphoserine modification. Glycyl lysine isopeptide (Lys-Gly) (interchain with G-Cter in SUMO2) cross-links involve residues Lys-130 and Lys-203. Lys-215 is subject to N6-acetyllysine. Residues 235-268 (YQQQQYGSGGRGNRNRGNRGSGGGGGGGGQSQSW) form a disordered region. Position 242 is a phosphoserine (Ser-242). Arg-245 is modified (dimethylated arginine; alternate). Arg-245 is modified (omega-N-methylarginine; alternate). Arg-250, Gly-251, Arg-253, and Gly-254 each carry omega-N-methylarginine. Gly residues predominate over residues 253–264 (RGSGGGGGGGGQ). 2 positions are modified to phosphoserine: Ser-255 and Gly-256. 3 positions are modified to N6-acetyllysine: Gly-271, Tyr-272, and Lys-318. A disordered region spans residues 311 to 332 (QGSTNYGKSQRRGGHQNNYKPY). Position 322 is a dimethylated arginine; alternate (Arg-322). An Omega-N-methylarginine; alternate modification is found at Arg-322. Residue Arg-322 is modified to Asymmetric dimethylarginine; alternate.

As to quaternary structure, identified in a IGF2BP1-dependent mRNP granule complex containing untranslated mRNAs. Interacts with APOBEC1. Dimethylation at Arg-322 is probably asymmetric. As to expression, ubiquitous.

The protein localises to the nucleus. It is found in the cytoplasm. Binds single-stranded RNA. Has a high affinity for G-rich and U-rich regions of hnRNA. Also binds to APOB mRNA transcripts around the RNA editing site. The polypeptide is Heterogeneous nuclear ribonucleoprotein A/B (HNRNPAB) (Homo sapiens (Human)).